A 654-amino-acid polypeptide reads, in one-letter code: Import motor subunit, mitochondrial (654 aa).

A mitochondrion-targeting transit peptide spans 1 to 23 (MLAAKNILNRSSLSSSFRIATRL). Threonine 330 bears the Phosphothreonine mark. Positions 629 to 654 (EQLYKNDSNNNNNNNGNNAESGETKQ) are disordered. Residues 637 to 646 (NNNNNNNGNN) show a composition bias toward low complexity.

It belongs to the heat shock protein 70 family. In terms of assembly, component of the PAM complex, at least composed of SSC1 (mtHsp70), MGE1, TIM44, PAM16/TIM16, PAM17 and PAM18/TIM14. In the complex, SSC1 interacts directly with PAM18 and TIM44. Interacts with NAP1.

Its subcellular location is the mitochondrion matrix. It carries out the reaction ATP + H2O = ADP + phosphate + H(+). Its function is as follows. Essential component of the PAM complex, a complex required for the translocation of transit peptide-containing proteins from the inner membrane into the mitochondrial matrix in an ATP-dependent manner. Constitutes the ATP-driven core of the motor and binds the precursor preprotein. Required for the import of the processed frataxin homolog YFH1 into the mitochondrion. In Saccharomyces cerevisiae (strain ATCC 204508 / S288c) (Baker's yeast), this protein is Import motor subunit, mitochondrial.